The sequence spans 440 residues: 3-phosphoshikimate 1-carboxyvinyltransferase (440 aa).

Residues Lys-26, Ser-27, and Arg-31 each coordinate 3-phosphoshikimate. Residue Lys-26 participates in phosphoenolpyruvate binding. Residues Gly-99 and Arg-127 each contribute to the phosphoenolpyruvate site. Ser-172, Gln-174, Asp-320, and Lys-347 together coordinate 3-phosphoshikimate. Gln-174 lines the phosphoenolpyruvate pocket. Asp-320 (proton acceptor) is an active-site residue. Residues Arg-351 and Arg-392 each coordinate phosphoenolpyruvate.

This sequence belongs to the EPSP synthase family. As to quaternary structure, monomer.

It localises to the cytoplasm. The enzyme catalyses 3-phosphoshikimate + phosphoenolpyruvate = 5-O-(1-carboxyvinyl)-3-phosphoshikimate + phosphate. It participates in metabolic intermediate biosynthesis; chorismate biosynthesis; chorismate from D-erythrose 4-phosphate and phosphoenolpyruvate: step 6/7. Functionally, catalyzes the transfer of the enolpyruvyl moiety of phosphoenolpyruvate (PEP) to the 5-hydroxyl of shikimate-3-phosphate (S3P) to produce enolpyruvyl shikimate-3-phosphate and inorganic phosphate. The chain is 3-phosphoshikimate 1-carboxyvinyltransferase from Xanthomonas euvesicatoria pv. vesicatoria (strain 85-10) (Xanthomonas campestris pv. vesicatoria).